Reading from the N-terminus, the 282-residue chain is U1 small nuclear ribonucleoprotein A (282 aa).

Position 2 is an N-acetylalanine (Ala2). An RRM 1 domain is found at 10-89 (HTIYINNLNE…KPMRIQYAKT (80 aa)). An N6-acetyllysine modification is found at Lys60. Residues 101 to 141 (FVERDRKREKRKPKSQETPAAKKAVQGGAAAPVVGTVQGPV) are disordered. Positions 119–141 (PAAKKAVQGGAAAPVVGTVQGPV) are enriched in low complexity. Residue Arg152 is modified to Omega-N-methylarginine. One can recognise an RRM 2 domain in the interval 208–282 (HILFLTNLPE…NAMKISFAKK (75 aa)).

Belongs to the RRM U1 A/B'' family. In terms of assembly, U1 snRNP is composed of the 7 core Sm proteins SNRPB, SNRPD1, SNRPD2, SNRPD3, SNRPE, SNRPF and SNRPG that assemble in a heptameric protein ring on the Sm site of the small nuclear RNA to form the core snRNP, and at least three U1 snRNP-specific proteins SNRNP70/U1-70K, SNRPA/U1-A and SNRPC/U1-C. Interacts with SFPQ; component of a snRNP-free complex with SFPQ.

Its subcellular location is the nucleus. Component of the spliceosomal U1 snRNP, which is essential for recognition of the pre-mRNA 5' splice-site and the subsequent assembly of the spliceosome. U1 snRNP is the first snRNP to interact with pre-mRNA. This interaction is required for the subsequent binding of U2 snRNP and the U4/U6/U5 tri-snRNP. SNRPA binds stem loop II of U1 snRNA. In a snRNP-free form (SF-A) may be involved in coupled pre-mRNA splicing and polyadenylation process. May bind preferentially to the 5'-UGCAC-3' motif on RNAs. In Bos taurus (Bovine), this protein is U1 small nuclear ribonucleoprotein A (SNRPA).